A 647-amino-acid chain; its full sequence is Serine/threonine-protein kinase PLK3 (647 aa).

Residues 1 to 56 form a disordered region; that stretch reads MEPAAGFLSPRPFPRAAAPSSPPAGPGPPASASPRSEPGVLAGPQTPDASRLITDP. Residues 20–31 are compositionally biased toward pro residues; sequence SSPPAGPGPPAS. One can recognise a Protein kinase domain in the interval 62–314; the sequence is YIKGRLLGKG…IEQILRHDFF (253 aa). ATP is bound by residues 68–76 and Lys-91; that span reads LGKGGFARC. Asp-185 acts as the Proton acceptor in catalysis. 2 consecutive POLO box domains span residues 464 to 542 and 563 to 646; these read WVSK…YMEQ and LLLQ…DRSP.

Belongs to the protein kinase superfamily. Ser/Thr protein kinase family. CDC5/Polo subfamily. Interacts with GOLGB1. Interacts (via the POLO-box domain) with CIB1; leading to inhibit PLK3 kinase activity. In terms of processing, phosphorylated in an ATM-dependent manner following DNA damage. Phosphorylated as cells enter mitosis and dephosphorylated as cells exit mitosis. As to expression, constitutively expressed in post-mitotic neurons.

It is found in the cell projection. Its subcellular location is the dendrite. It localises to the cytoplasm. The protein resides in the nucleus. The protein localises to the nucleolus. It is found in the golgi apparatus. Its subcellular location is the cytoskeleton. It localises to the microtubule organizing center. The protein resides in the centrosome. The enzyme catalyses L-seryl-[protein] + ATP = O-phospho-L-seryl-[protein] + ADP + H(+). It catalyses the reaction L-threonyl-[protein] + ATP = O-phospho-L-threonyl-[protein] + ADP + H(+). Its function is as follows. Serine/threonine-protein kinase involved in cell cycle regulation, response to stress and Golgi disassembly. Polo-like kinases act by binding and phosphorylating proteins that are already phosphorylated on a specific motif recognized by the POLO box domains. Phosphorylates ATF2, BCL2L1, CDC25A, CDC25C, CHEK2, HIF1A, JUN, p53/TP53, p73/TP73, PTEN, TOP2A and VRK1. Involved in cell cycle regulation: required for entry into S phase and cytokinesis. Phosphorylates BCL2L1, leading to regulate the G2 checkpoint and progression to cytokinesis during mitosis. Plays a key role in response to stress: rapidly activated upon stress stimulation, such as ionizing radiation, reactive oxygen species (ROS), hyperosmotic stress, UV irradiation and hypoxia. Involved in DNA damage response and G1/S transition checkpoint by phosphorylating CDC25A, p53/TP53 and p73/TP73. Phosphorylates p53/TP53 in response to reactive oxygen species (ROS), thereby promoting p53/TP53-mediated apoptosis. Phosphorylates CHEK2 in response to DNA damage, promoting the G2/M transition checkpoint. Phosphorylates the transcription factor p73/TP73 in response to DNA damage, leading to inhibit p73/TP73-mediated transcriptional activation and pro-apoptotic functions. Phosphorylates HIF1A and JUN is response to hypoxia. Phosphorylates ATF2 following hyperosmotic stress in corneal epithelium. Also involved in Golgi disassembly during the cell cycle: part of a MEK1/MAP2K1-dependent pathway that induces Golgi fragmentation during mitosis by mediating phosphorylation of VRK1. May participate in endomitotic cell cycle, a form of mitosis in which both karyokinesis and cytokinesis are interrupted and is a hallmark of megakaryocyte differentiation, via its interaction with CIB1. This is Serine/threonine-protein kinase PLK3 (Plk3) from Rattus norvegicus (Rat).